A 499-amino-acid chain; its full sequence is Probable cytosol aminopeptidase (499 aa).

Lysine 263 and aspartate 268 together coordinate Mn(2+). Lysine 275 is an active-site residue. Mn(2+)-binding residues include aspartate 286, aspartate 345, and glutamate 347. Arginine 349 is an active-site residue.

Belongs to the peptidase M17 family. Mn(2+) serves as cofactor.

It localises to the cytoplasm. The enzyme catalyses Release of an N-terminal amino acid, Xaa-|-Yaa-, in which Xaa is preferably Leu, but may be other amino acids including Pro although not Arg or Lys, and Yaa may be Pro. Amino acid amides and methyl esters are also readily hydrolyzed, but rates on arylamides are exceedingly low.. It catalyses the reaction Release of an N-terminal amino acid, preferentially leucine, but not glutamic or aspartic acids.. Functionally, presumably involved in the processing and regular turnover of intracellular proteins. Catalyzes the removal of unsubstituted N-terminal amino acids from various peptides. This chain is Probable cytosol aminopeptidase (pepA), found in Chlamydia trachomatis serovar D (strain ATCC VR-885 / DSM 19411 / UW-3/Cx).